We begin with the raw amino-acid sequence, 153 residues long: Flagellar assembly factor FliW (153 aa).

Belongs to the FliW family. Interacts with translational regulator CsrA and flagellin(s).

It is found in the cytoplasm. Acts as an anti-CsrA protein, binds CsrA and prevents it from repressing translation of its target genes, one of which is flagellin. Binds to flagellin and participates in the assembly of the flagellum. The protein is Flagellar assembly factor FliW of Leptospira biflexa serovar Patoc (strain Patoc 1 / Ames).